Consider the following 265-residue polypeptide: 5'-nucleotidase SurE (265 aa).

A divalent metal cation contacts are provided by D9, D10, S40, and N96.

This sequence belongs to the SurE nucleotidase family. A divalent metal cation is required as a cofactor.

It is found in the cytoplasm. It carries out the reaction a ribonucleoside 5'-phosphate + H2O = a ribonucleoside + phosphate. Functionally, nucleotidase that shows phosphatase activity on nucleoside 5'-monophosphates. This is 5'-nucleotidase SurE from Methanothrix thermoacetophila (strain DSM 6194 / JCM 14653 / NBRC 101360 / PT) (Methanosaeta thermophila).